The chain runs to 150 residues: MAAKFKLLVINGPNLNMLGKREPDKYGSRTLSEIMSELTCAADSLNVELTHFQSNSEQALIERIHDTWQAIDYIIINPAAFTHTSVALRDALLSVDIPFFEVHLSNVHAREAFRHHSYFSDVAQGVICGLGAMGYHAALEAAVNQLQNSN.

Residue Tyr-26 is the Proton acceptor of the active site. The substrate site is built by Asn-77, His-83, and Asp-90. The Proton donor role is filled by His-103. Residues 104-105 (LS) and Arg-114 contribute to the substrate site.

Belongs to the type-II 3-dehydroquinase family. As to quaternary structure, homododecamer.

The catalysed reaction is 3-dehydroquinate = 3-dehydroshikimate + H2O. It participates in metabolic intermediate biosynthesis; chorismate biosynthesis; chorismate from D-erythrose 4-phosphate and phosphoenolpyruvate: step 3/7. Catalyzes a trans-dehydration via an enolate intermediate. The sequence is that of 3-dehydroquinate dehydratase from Pseudoalteromonas translucida (strain TAC 125).